Reading from the N-terminus, the 241-residue chain is MKLVDYLLEGSVKHFTLIDPDKSVDYLKIVRYALDAGTDGILVGGSLGIRETQMTQVVKDIKSVAHVPVVLFPGSPSQLTEEADGVLFLSVLNSLDPYFIIGAQVQGAVLIAKHFPRLEVISTAYVIVGDGGAAGFVSMSKPIPYARWDLAVAYALAAYYIGFGAVYLEAGSGAPQPVPPEMVRAVRKVFPRVLIVGGGIRSGEAARQLARERPNVIVTGTLAEEQPEKLAEVVRAIKSSL.

Mg(2+)-binding residues include D19 and S46. Sn-glycerol 1-phosphate contacts are provided by residues Y167 to G173, G198 to G199, and G220 to T221.

It belongs to the GGGP/HepGP synthase family. Group II subfamily. Mg(2+) serves as cofactor.

The protein localises to the cytoplasm. The enzyme catalyses sn-glycerol 1-phosphate + (2E,6E,10E)-geranylgeranyl diphosphate = sn-3-O-(geranylgeranyl)glycerol 1-phosphate + diphosphate. The protein operates within membrane lipid metabolism; glycerophospholipid metabolism. Functionally, prenyltransferase that catalyzes the transfer of the geranylgeranyl moiety of geranylgeranyl diphosphate (GGPP) to the C3 hydroxyl of sn-glycerol-1-phosphate (G1P). This reaction is the first ether-bond-formation step in the biosynthesis of archaeal membrane lipids. This Pyrobaculum calidifontis (strain DSM 21063 / JCM 11548 / VA1) protein is Geranylgeranylglyceryl phosphate synthase.